The sequence spans 230 residues: Large ribosomal subunit protein uL1 (230 aa).

The protein belongs to the universal ribosomal protein uL1 family. As to quaternary structure, part of the 50S ribosomal subunit.

Functionally, binds directly to 23S rRNA. The L1 stalk is quite mobile in the ribosome, and is involved in E site tRNA release. Protein L1 is also a translational repressor protein, it controls the translation of the L11 operon by binding to its mRNA. The chain is Large ribosomal subunit protein uL1 from Bifidobacterium longum subsp. infantis (strain ATCC 15697 / DSM 20088 / JCM 1222 / NCTC 11817 / S12).